Reading from the N-terminus, the 241-residue chain is Zinc finger CCHC domain-containing protein 17 (241 aa).

Residues Y16 to K88 enclose the S1 motif domain. S114 is modified (phosphoserine). The CCHC-type zinc-finger motif lies at T131–M148. K144 carries the post-translational modification N6-acetyllysine. A disordered region spans residues E161–E241. Residues E166–P178 show a composition bias toward basic and acidic residues. Residues P182 to R198 show a composition bias toward basic residues. S183 carries the post-translational modification Phosphoserine. The segment covering D211–A225 has biased composition (basic and acidic residues). Positions A226–E241 are enriched in basic residues.

Interacts with PNN. Associates with the 60S ribosomal subunit.

The protein localises to the nucleus. It localises to the nucleolus. The polypeptide is Zinc finger CCHC domain-containing protein 17 (ZCCHC17) (Homo sapiens (Human)).